Here is a 314-residue protein sequence, read N- to C-terminus: Protein OPG185 (314 aa).

Positions 1 to 16 are cleaved as a signal peptide; the sequence is MTRLPILLLLISLVYA. The Ig-like V-type domain maps to 17-121; the sequence is TPFPQTSKKI…NDTDKVDYEE (105 aa). Residues 17–278 lie on the Virion surface side of the membrane; the sequence is TPFPQTSKKI…SNYKTKDFVE (262 aa). Cys34 and Cys103 form a disulfide bridge. Residues Asn37, Asn69, Asn112, and Asn161 are each glycosylated (N-linked (GlcNAc...) asparagine; by host). Residues 193–202 are compositionally biased toward polar residues; the sequence is NTVSASSGES. Residues 193-214 form a disordered region; the sequence is NTVSASSGESTTDETPEPITDK. N-linked (GlcNAc...) asparagine; by host glycosylation is present at Asn253. A helical transmembrane segment spans residues 279–302; the sequence is IFGITALIILSAVAIFCITYYIYN. At 303-314 the chain is on the intravirion side; it reads KRSRKYKTENKV.

The protein belongs to the orthopoxvirus OPG185 family. Heterodimerizes with OPG040. The heterodimer OPG185-OPG040 interacts with components of the entry fusion complex OPG143 and OPG094. Heterodimer with C3/VPC protein; disulfide-linked. In terms of processing, glycosylated; contains phosphate and sulfate-substituted glycans. O-glycosylation is required for hemagglutination and hemadsorption activities of infected cell membranes.

It localises to the virion membrane. The protein resides in the host membrane. Its function is as follows. Prevents cell to cell fusion by interacting with and directing the viral OPG040 protein on the host plasma membrane. The OPG185-OPG040 complex associates with components of the entry fusion complex (EFC) presumably to avoid superinfection and syncytium formation. Via its interaction with C3/VCP protein, protects the infected cell and probably also the extracellular enveloped virus from complement attack. This Bos taurus (Bovine) protein is Protein OPG185 (OPG185).